The sequence spans 159 residues: Defense protein l(2)34Fc (159 aa).

A signal peptide spans 1–17 (MFRLLVLAACLAISVHA). Positions 18–159 (YSDGAPKAAC…GRVTKDIDVE (142 aa)) constitute a Reelin domain. Residues Cys-27 and Cys-99 are joined by a disulfide bond.

This sequence belongs to the insect defense protein family.

It localises to the secreted. Its function is as follows. May have antimicrobial activity. A late response immune regulated gene that is negatively regulated by spz during the immune response. The chain is Defense protein l(2)34Fc (l(2)34Fc) from Drosophila melanogaster (Fruit fly).